Reading from the N-terminus, the 536-residue chain is Proto-oncogene tyrosine-protein kinase Yrk (536 aa).

Glycine 2 carries N-myristoyl glycine lipidation. Residues cysteine 3 and cysteine 6 are each lipidated (S-palmitoyl cysteine). The segment at 10 to 36 (ISGKGQGGSGTGTPAHPPSQYDPDPTQ) is disordered. The SH3 domain occupies 81–142 (GGVTLFIALY…PSNYVAPVDS (62 aa)). An SH2 domain is found at 148–245 (WYFGKIGRKD…GLCCRLAVPC (98 aa)). Residues 270 to 523 (LQLLQKLGNG…YLQSFLEDYF (254 aa)) enclose the Protein kinase domain. ATP contacts are provided by residues 276-284 (LGNGQFGEV) and lysine 298. The active-site Proton acceptor is aspartate 389. A Phosphotyrosine; by autocatalysis modification is found at tyrosine 419. A Phosphotyrosine modification is found at tyrosine 530.

This sequence belongs to the protein kinase superfamily. Tyr protein kinase family. SRC subfamily. Post-translationally, phosphorylated. As to expression, there are elevated levels of this protein in neural and hematopoietic tissues.

It catalyses the reaction L-tyrosyl-[protein] + ATP = O-phospho-L-tyrosyl-[protein] + ADP + H(+). In terms of biological role, may participate in signaling pathways. This chain is Proto-oncogene tyrosine-protein kinase Yrk (YRK), found in Gallus gallus (Chicken).